We begin with the raw amino-acid sequence, 498 residues long: ATP synthase subunit beta, chloroplastic (498 aa).

172–179 is an ATP binding site; sequence GGAGVGKT.

The protein belongs to the ATPase alpha/beta chains family. F-type ATPases have 2 components, CF(1) - the catalytic core - and CF(0) - the membrane proton channel. CF(1) has five subunits: alpha(3), beta(3), gamma(1), delta(1), epsilon(1). CF(0) has four main subunits: a(1), b(1), b'(1) and c(9-12).

The protein localises to the plastid. The protein resides in the chloroplast thylakoid membrane. The enzyme catalyses ATP + H2O + 4 H(+)(in) = ADP + phosphate + 5 H(+)(out). Functionally, produces ATP from ADP in the presence of a proton gradient across the membrane. The catalytic sites are hosted primarily by the beta subunits. This is ATP synthase subunit beta, chloroplastic from Illicium oligandrum (Star anise).